The primary structure comprises 401 residues: uncharacterized protein (401 aa).

10 consecutive transmembrane segments (helical) span residues 20–40 (FFGELLTSLTGAMMGPFMVLY), 49–69 (IMMPMLIISLQPFADIFLTLA), 83–100 (ILTALLLQSAAMTGFVFA), 104–121 (YVFAILYVMNGIGRSLYI), 140–160 (VFAVINAIYSTGLTAGPLVGM), 167–187 (PVWIFALDAAALFIYFLIAAL), 207–227 (FTIYRPVLLLLLLSLPISMLY), 248–268 (MLTIYSAAKALFSCVLQVPLV), 289–309 (LAAAGFACSTSLTMLLVTAAV), and 357–377 (GLILTSFGGEVIFYALAVCLL).

It belongs to the major facilitator superfamily.

Its subcellular location is the cell membrane. This is an uncharacterized protein from Bacillus subtilis (strain 168).